The following is a 291-amino-acid chain: Lipoyl synthase (291 aa).

7 residues coordinate [4Fe-4S] cluster: C33, C38, C44, C59, C63, C66, and S274. One can recognise a Radical SAM core domain in the interval W45 to K263.

The protein belongs to the radical SAM superfamily. Lipoyl synthase family. Requires [4Fe-4S] cluster as cofactor.

It is found in the cytoplasm. The enzyme catalyses [[Fe-S] cluster scaffold protein carrying a second [4Fe-4S](2+) cluster] + N(6)-octanoyl-L-lysyl-[protein] + 2 oxidized [2Fe-2S]-[ferredoxin] + 2 S-adenosyl-L-methionine + 4 H(+) = [[Fe-S] cluster scaffold protein] + N(6)-[(R)-dihydrolipoyl]-L-lysyl-[protein] + 4 Fe(3+) + 2 hydrogen sulfide + 2 5'-deoxyadenosine + 2 L-methionine + 2 reduced [2Fe-2S]-[ferredoxin]. The protein operates within protein modification; protein lipoylation via endogenous pathway; protein N(6)-(lipoyl)lysine from octanoyl-[acyl-carrier-protein]: step 2/2. Its function is as follows. Catalyzes the radical-mediated insertion of two sulfur atoms into the C-6 and C-8 positions of the octanoyl moiety bound to the lipoyl domains of lipoate-dependent enzymes, thereby converting the octanoylated domains into lipoylated derivatives. The protein is Lipoyl synthase of Pyrobaculum calidifontis (strain DSM 21063 / JCM 11548 / VA1).